Reading from the N-terminus, the 928-residue chain is Chitin synthase 2 (928 aa).

Disordered stretches follow at residues 1-45 and 110-179; these read MAYN…EAYA and AYYT…SPAP. Residues 17 to 28 show a composition bias toward polar residues; that stretch reads PSAQPQYDSRSP. The span at 130 to 140 shows a compositional bias: basic and acidic residues; sequence PSHDEPYRPDT. 9 helical membrane passes run 472–492, 570–589, 613–633, 644–664, 678–698, 723–743, 753–773, 854–874, and 893–913; these read SAFG…YVAL, WLNG…YQLW, LFAW…TASL, TVLG…CFIL, MMMV…SIFL, FFGL…ASFL, CFLQ…IYAF, VTAW…IAGF, and VILW…CWFL.

Belongs to the chitin synthase family. Class I subfamily.

It localises to the cell membrane. The enzyme catalyses [(1-&gt;4)-N-acetyl-beta-D-glucosaminyl](n) + UDP-N-acetyl-alpha-D-glucosamine = [(1-&gt;4)-N-acetyl-beta-D-glucosaminyl](n+1) + UDP + H(+). Polymerizes chitin, a structural polymer of the cell wall and septum, by transferring the sugar moiety of UDP-GlcNAc to the non-reducing end of the growing chitin polymer. CHS2 plays a synergistic role to CHS1 in normal yeast cell reproductive growth, even if this role is less predominant than for CHS1. With CHS3, plays an important role in virulence. In Exophiala dermatitidis (Black yeast-like fungus), this protein is Chitin synthase 2.